The primary structure comprises 498 residues: Type II secretion system protein E (498 aa).

Zn(2+)-binding residues include Cys394, Cys397, Cys425, and Cys428.

The protein belongs to the GSP E family. Forms homooligomers; most probably hexamers. Interacts with OutL/GspL. It depends on Zn(2+) as a cofactor.

Its subcellular location is the cell inner membrane. The enzyme catalyses ATP + H2O + cellular proteinSide 1 = ADP + phosphate + cellular proteinSide 2.. In terms of biological role, ATPase component of the type II secretion system required for the energy-dependent secretion of extracellular factors such as proteases and toxins from the periplasm. Acts as a molecular motor to provide the energy that is required for assembly of the pseudopilus and the extrusion of substrates generated in the cytoplasm. In Dickeya dadantii (strain 3937) (Erwinia chrysanthemi (strain 3937)), this protein is Type II secretion system protein E (outE).